We begin with the raw amino-acid sequence, 72 residues long: SPbeta prophage-derived uncharacterized protein YorV (72 aa).

This Bacillus subtilis (strain 168) protein is SPbeta prophage-derived uncharacterized protein YorV (yorV).